The sequence spans 341 residues: THO complex subunit 6 homolog (341 aa).

WD repeat units follow at residues 22 to 61 (RLHMTIFSQSVSPCGKFLAAGNNYGQIAIFSLSAALSSEA), 74 to 112 (AHDGPVYSMVSTDRHLLSAGDGEVKGWLWAEILKKGCKE), 124 to 165 (LEVP…RALR), 166 to 205 (GHTDYIHCLALRERSPEVLSGGEDGAVRLWDLRIAKEVQT), 215 to 254 (SRPHNGRWIGCLATDSDWMVCGGGPALTLWHLRSSTPTTV), 256 to 293 (PIRAPQKHVTFYQDLILSAGQGCCVNHWQLSGELKAQV), and 295 to 339 (GSSP…AFSL). S180 bears the Phosphoserine mark.

This sequence belongs to the WD repeat THOC6 family. As to quaternary structure, component of the THO subcomplex, which is composed of THOC1, THOC2, THOC3, THOC5, THOC6 and THOC7. The THO subcomplex interacts with DDX39B to form the THO-DDX39B complex which multimerizes into a 28-subunit tetrameric assembly. Component of the transcription/export (TREX) complex at least composed of ALYREF/THOC4, DDX39B, SARNP/CIP29, CHTOP and the THO subcomplex; in the complex interacts with THOC5; together with THOC5 and THOC7, plays a key structural role in the oligomerization of the THO-DDX39B complex. TREX seems to have a dynamic structure involving ATP-dependent remodeling.

The protein localises to the nucleus. The protein resides in the nucleus speckle. Its function is as follows. Component of the THO subcomplex of the TREX complex which is thought to couple mRNA transcription, processing and nuclear export, and which specifically associates with spliced mRNA and not with unspliced pre-mRNA. Plays a key structural role in the oligomerization of the THO-DDX39B complex. TREX is recruited to spliced mRNAs by a transcription-independent mechanism, binds to mRNA upstream of the exon-junction complex (EJC) and is recruited in a splicing- and cap-dependent manner to a region near the 5' end of the mRNA where it functions in mRNA export to the cytoplasm via the TAP/NXF1 pathway. Plays a role in apoptosis negative control involved in brain development. The sequence is that of THO complex subunit 6 homolog (Thoc6) from Mus musculus (Mouse).